The sequence spans 1052 residues: Calmin (1052 aa).

Residues 1 to 288 (MAAQEWDWFQ…IVTYVAQFLE (288 aa)) are actin-binding. Residues 32 to 139 (NVQKRTFTRW…LIWNIILFFQ (108 aa)) enclose the Calponin-homology (CH) 1 domain. Positions 148-168 (SRSSPSSSLSPGSGGTDSDSS) are enriched in low complexity. The tract at residues 148 to 178 (SRSSPSSSLSPGSGGTDSDSSYPPTPTTERS) is disordered. A Calponin-homology (CH) 2 domain is found at 187–291 (RKAIKTLLSW…YVAQFLERFP (105 aa)). Disordered stretches follow at residues 391-420 (STGKTGSIAEPTPESSILSTRKDGRRSNSL), 455-545 (KATK…TLLA), 585-727 (STSQ…SPPL), and 758-929 (GEDL…DSSI). 2 stretches are compositionally biased toward basic and acidic residues: residues 455-465 (KATKELSKQDG) and 472-495 (VSKEKKKSEQEARLVLEAASDKVP). The segment covering 509-529 (AQPSQDSSFCNGTVESPSSQG) has biased composition (polar residues). Serine 537 carries the post-translational modification Phosphoserine. Composition is skewed to basic and acidic residues over residues 594–614 (PSSHEKTRGEEEGSENHAEKP), 622–651 (PRAETEAAESRLEPKKLEPPPKDPEQEDQG), and 659–669 (PADKKPKVYEK). At serine 679 the chain carries Phosphoserine. At threonine 710 the chain carries Phosphothreonine. The segment covering 711–720 (LRSHSEEGLD) has biased composition (basic and acidic residues). A Phosphoserine modification is found at serine 724. Basic and acidic residues predominate over residues 759–773 (EDLKSEDTDLEHPED). Positions 780–791 (REEEADEDEEEA) are enriched in acidic residues. Low complexity predominate over residues 792–801 (QSSQSSCSFS). Basic and acidic residues predominate over residues 836-849 (SHEDHQPKETKENG). Serine 856 is modified (phosphoserine). The segment covering 880-889 (SKKKEKRKHM) has biased composition (basic residues). Serine 925 bears the Phosphoserine mark. A helical; Anchor for type IV membrane protein membrane pass occupies residues 1027–1047 (VIYFILFLWLLVYCLLLFPQL).

In terms of tissue distribution, expressed in testis. Expressed during testis maturation process and in maturing spermatids. In brain, it is expressed in neurons of the hippocampus, cerebral cortex, and thalamus, Purkinje cells, and also in the choroid plexus and ependymal cells. Expressed predominantly in dendrites and cell bodies of the neurons, but not in axons. The level of expression increases during the period of maturation of the mouse brain after birth.

The protein localises to the membrane. It localises to the cytoplasm. In Mus musculus (Mouse), this protein is Calmin (Clmn).